A 773-amino-acid chain; its full sequence is Protein FAM149A (773 aa).

Low complexity-rich tracts occupy residues 18–37 and 54–90; these read TSTA…AAAA and LLRA…AAGA. Disordered regions lie at residues 18–155, 173–210, 232–264, and 568–613; these read TSTA…RELG, DIGE…DSLP, FSSS…TERG, and TQNE…PWRL. A compositionally biased stretch (acidic residues) spans 174–186; that stretch reads IGEEGASDGDSGD. Positions 245 to 264 are enriched in low complexity; the sequence is TSWSGSATQSSTTGSSTERG.

This sequence belongs to the FAM149 family.

The polypeptide is Protein FAM149A (FAM149A) (Homo sapiens (Human)).